The sequence spans 90 residues: Probable Fe(2+)-trafficking protein (90 aa).

This sequence belongs to the Fe(2+)-trafficking protein family.

Could be a mediator in iron transactions between iron acquisition and iron-requiring processes, such as synthesis and/or repair of Fe-S clusters in biosynthetic enzymes. The polypeptide is Probable Fe(2+)-trafficking protein (Acinetobacter baylyi (strain ATCC 33305 / BD413 / ADP1)).